We begin with the raw amino-acid sequence, 366 residues long: Sigma54-dependent transcriptional activator SfnR (366 aa).

Residues 21 to 250 enclose the Sigma-54 factor interaction domain; sequence QVFEDPRSQA…LENVIHHSLL (230 aa). Residues 49-56 and 112-121 each bind ATP; these read GETGTGKE and ANGGTLFLDE.

In terms of biological role, involved in the dimethyl sulfide degradation pathway. Activates the expression of sfnG and sfnF. The polypeptide is Sigma54-dependent transcriptional activator SfnR (Pseudomonas putida (Arthrobacter siderocapsulatus)).